Here is a 269-residue protein sequence, read N- to C-terminus: UPF0524 protein C3orf70 homolog A (269 aa).

2 disordered regions span residues 139–203 and 215–249; these read VQRP…DSGI and DEDSCVDDDDEEEEDDELSTDGNSSPGSFWDQDEC. Residues 141–150 are compositionally biased toward pro residues; it reads RPPPPTPNPT. Positions 151–164 are enriched in low complexity; it reads HQPQTAAPQPVPQR. The segment covering 179 to 191 has biased composition (basic and acidic residues); the sequence is QAKEKISAPKMDH. Residues 215–233 show a composition bias toward acidic residues; that stretch reads DEDSCVDDDDEEEEDDELS.

Belongs to the UPF0524 family.

Functionally, plays a role in neuronal and neurobehavioral development. Required for normal expression of neuronal markers elavl3 and eno2 and neurobehaviors related to circadian rhythm and changes in light-dark conditions. The chain is UPF0524 protein C3orf70 homolog A from Danio rerio (Zebrafish).